The following is a 357-amino-acid chain: MHAVLALETSCDESAAAVLRRHADGRIDVLASRIASQVEEHARWGGVVPEIASRRHVEALPGLVEAVVDEAGVTLGQLDAIAATITPGLAGALMVASVTGRTLAALHQRPFLGVHHLEGHLASVMLGDVPQQAPYLVLLVSGGHTELILVAEDGGMTRLGRSHDDAAGEAFDKVARLLGLGYPGGPAIQAVAETGDATRFRLPKGRISLPGGGFHPYDFSFSGLKTAMLRTVETLRQTTDSLPLADLAASFEQVVADVLVQRSLRCAADHGVQQLVMVGGVAANRRLRQSMLEQGNQRGIAVSIAPLAFCTDNAAMIGAAALMRLGQNAACTSFESGVAARWPLDQANALYTPDPPF.

2 residues coordinate Fe cation: histidine 116 and histidine 120. Residues 139 to 143 (LVSGG), aspartate 172, glycine 185, and asparagine 284 contribute to the substrate site. Aspartate 312 provides a ligand contact to Fe cation.

Belongs to the KAE1 / TsaD family. Fe(2+) is required as a cofactor.

The protein resides in the cytoplasm. The catalysed reaction is L-threonylcarbamoyladenylate + adenosine(37) in tRNA = N(6)-L-threonylcarbamoyladenosine(37) in tRNA + AMP + H(+). In terms of biological role, required for the formation of a threonylcarbamoyl group on adenosine at position 37 (t(6)A37) in tRNAs that read codons beginning with adenine. Is involved in the transfer of the threonylcarbamoyl moiety of threonylcarbamoyl-AMP (TC-AMP) to the N6 group of A37, together with TsaE and TsaB. TsaD likely plays a direct catalytic role in this reaction. The sequence is that of tRNA N6-adenosine threonylcarbamoyltransferase from Synechococcus sp. (strain CC9605).